The sequence spans 522 residues: Ribonuclease Y (522 aa).

The chain crosses the membrane as a helical span at residues 7-27; the sequence is STILYCLFFFFLGIAAVLAFI. In terms of domain architecture, KH spans 212 to 272; that stretch reads TTSTVGVPTD…VRREVARMSL (61 aa). The 94-residue stretch at 338–431 folds into the HD domain; that stretch reads VLRHSVEVAF…VATADACSAS (94 aa).

Belongs to the RNase Y family.

It localises to the cell membrane. Functionally, endoribonuclease that initiates mRNA decay. This Rhodopirellula baltica (strain DSM 10527 / NCIMB 13988 / SH1) protein is Ribonuclease Y.